Reading from the N-terminus, the 90-residue chain is Barstar (90 aa).

This sequence belongs to the barstar family.

It is found in the cytoplasm. Functionally, inhibitor of the ribonuclease barnase. Forms a one-to-one non-covalent complex. In Bacillus amyloliquefaciens (Bacillus velezensis), this protein is Barstar.